A 90-amino-acid chain; its full sequence is Progonadoliberin-3 (90 aa).

Positions 1 to 23 are cleaved as a signal peptide; it reads MDVSSKVVVQVLLLALVVQVTLC. Position 24 is a pyrrolidone carboxylic acid (Gln24). The residue at position 33 (Gly33) is a Glycine amide.

This sequence belongs to the GnRH family. Expressed in neuron cell bodies of the nucleus olfactoretinalis.

It localises to the secreted. Stimulates the secretion of gonadotropins. The sequence is that of Progonadoliberin-3 (gnrh3) from Oryzias latipes (Japanese rice fish).